A 539-amino-acid polypeptide reads, in one-letter code: NADH-quinone oxidoreductase subunit N 2 (539 aa).

The next 13 membrane-spanning stretches (helical) occupy residues 11 to 31 (LIPE…DVLT), 52 to 72 (LMGL…FSWM), 106 to 126 (PLTH…VILT), 141 to 161 (LILF…LIMI), 193 to 213 (YIFG…LLGL), 248 to 268 (GVAI…VAIV), 296 to 316 (AGFF…SILG), 329 to 349 (WTSL…LAAL), 357 to 377 (MLAY…VGTQ), 385 to 405 (LMYL…LALV), 429 to 449 (LLLT…GFFV), 462 to 484 (AKWL…LRFL), and 500 to 520 (VGFG…GLGI).

Belongs to the complex I subunit 2 family. In terms of assembly, NDH-1 is composed of 14 different subunits. Subunits NuoA, H, J, K, L, M, N constitute the membrane sector of the complex.

Its subcellular location is the cell membrane. The enzyme catalyses a quinone + NADH + 5 H(+)(in) = a quinol + NAD(+) + 4 H(+)(out). Its function is as follows. NDH-1 shuttles electrons from NADH, via FMN and iron-sulfur (Fe-S) centers, to quinones in the respiratory chain. The immediate electron acceptor for the enzyme in this species is believed to be ubiquinone. Couples the redox reaction to proton translocation (for every two electrons transferred, four hydrogen ions are translocated across the cytoplasmic membrane), and thus conserves the redox energy in a proton gradient. This Herpetosiphon aurantiacus (strain ATCC 23779 / DSM 785 / 114-95) protein is NADH-quinone oxidoreductase subunit N 2.